The primary structure comprises 265 residues: 5'-nucleotidase SurE (265 aa).

Asp9, Asp10, Ser40, and Asn96 together coordinate a divalent metal cation.

Belongs to the SurE nucleotidase family. A divalent metal cation is required as a cofactor.

Its subcellular location is the cytoplasm. The catalysed reaction is a ribonucleoside 5'-phosphate + H2O = a ribonucleoside + phosphate. In terms of biological role, nucleotidase that shows phosphatase activity on nucleoside 5'-monophosphates. The polypeptide is 5'-nucleotidase SurE (Methanothrix thermoacetophila (strain DSM 6194 / JCM 14653 / NBRC 101360 / PT) (Methanosaeta thermophila)).